The following is a 423-amino-acid chain: Lipoyl synthase 1, mitochondrial (423 aa).

[4Fe-4S] cluster-binding residues include cysteine 127, cysteine 132, cysteine 138, cysteine 159, cysteine 163, cysteine 166, and serine 375. A Radical SAM core domain is found at 142-364 (DEEEGTATAT…EEEAMAMGFL (223 aa)).

It belongs to the radical SAM superfamily. Lipoyl synthase family. It depends on [4Fe-4S] cluster as a cofactor.

It is found in the mitochondrion. The catalysed reaction is [[Fe-S] cluster scaffold protein carrying a second [4Fe-4S](2+) cluster] + N(6)-octanoyl-L-lysyl-[protein] + 2 oxidized [2Fe-2S]-[ferredoxin] + 2 S-adenosyl-L-methionine + 4 H(+) = [[Fe-S] cluster scaffold protein] + N(6)-[(R)-dihydrolipoyl]-L-lysyl-[protein] + 4 Fe(3+) + 2 hydrogen sulfide + 2 5'-deoxyadenosine + 2 L-methionine + 2 reduced [2Fe-2S]-[ferredoxin]. It functions in the pathway protein modification; protein lipoylation via endogenous pathway; protein N(6)-(lipoyl)lysine from octanoyl-[acyl-carrier-protein]: step 2/2. Functionally, catalyzes the radical-mediated insertion of two sulfur atoms into the C-6 and C-8 positions of the octanoyl moiety bound to the lipoyl domains of lipoate-dependent enzymes, thereby converting the octanoylated domains into lipoylated derivatives. The sequence is that of Lipoyl synthase 1, mitochondrial from Trypanosoma cruzi (strain CL Brener).